A 302-amino-acid polypeptide reads, in one-letter code: Pyridoxal kinase (302 aa).

Positions 10, 45, and 122 each coordinate substrate. ATP-binding positions include 181–182 (TS) and 215–227 (VGPK…TGTG). Substrate is bound at residue aspartate 228.

This sequence belongs to the pyridoxine kinase family. In terms of assembly, homodimer. The cofactor is a divalent metal cation.

The protein localises to the cytoplasm. The catalysed reaction is pyridoxal + ATP = pyridoxal 5'-phosphate + ADP + H(+). It functions in the pathway cofactor metabolism; pyridoxal 5'-phosphate salvage; pyridoxal 5'-phosphate from pyridoxal: step 1/1. Required for synthesis of pyridoxal-5-phosphate from vitamin B6. This chain is Pyridoxal kinase (pykA), found in Dictyostelium discoideum (Social amoeba).